The primary structure comprises 378 residues: Putative monoglyceride lipase (378 aa).

The GXSXG signature appears at 97 to 101 (GHSMG). Catalysis depends on Ser99, which acts as the Nucleophile. Active-site charge relay system residues include Asp219 and His249. The span at 276-292 (PSETVKSEQETAVEHPK) shows a compositional bias: basic and acidic residues. The tract at residues 276–350 (PSETVKSEQE…TSESTTVPET (75 aa)) is disordered. The span at 293-305 (PTATTSAPSASPT) shows a compositional bias: low complexity. Residue Ser301 is modified to Phosphoserine. Positions 341–350 (TSESTTVPET) are enriched in polar residues.

The protein belongs to the AB hydrolase superfamily. Monoacylglycerol lipase family.

Its subcellular location is the lipid droplet. The protein resides in the cytoplasm. The protein localises to the endoplasmic reticulum. It is found in the mitochondrion outer membrane. It catalyses the reaction Hydrolyzes glycerol monoesters of long-chain fatty acids.. It functions in the pathway glycerolipid metabolism; triacylglycerol degradation. In terms of biological role, converts monoacylglycerides (MAG) to free fatty acids and glycerol. Has a strong preference for monounsaturated monoglycerides. Required for efficient degradation of MAG, short-lived intermediates of glycerolipid metabolism which may also function as lipid signaling molecules. Controls inactivation of the signaling lipid N-palmitoylethanolamine (PEA). Involved in fatty acid ethyl ester (FAEE) catabolism. FAEEs are non-oxidative metabolites of ethanol that are transiently incorporated into lipid droplets (LDs). Their mobilization by LD-resident FAEE hydrolases facilitates a controlled metabolism of these potentially toxic lipid metabolites. The chain is Putative monoglyceride lipase (mgl1) from Schizosaccharomyces pombe (strain 972 / ATCC 24843) (Fission yeast).